Consider the following 95-residue polypeptide: Small ribosomal subunit protein uS19 (95 aa).

Residues 75–95 are disordered; the sequence is APTRSFRGHGGKKADKRGKMK. The segment covering 80-95 has biased composition (basic residues); the sequence is FRGHGGKKADKRGKMK.

Belongs to the universal ribosomal protein uS19 family.

Its function is as follows. Protein S19 forms a complex with S13 that binds strongly to the 16S ribosomal RNA. The protein is Small ribosomal subunit protein uS19 of Roseiflexus sp. (strain RS-1).